Reading from the N-terminus, the 260-residue chain is Pyridoxine 5'-phosphate synthase (260 aa).

A 3-amino-2-oxopropyl phosphate-binding site is contributed by N15. D17–H18 is a 1-deoxy-D-xylulose 5-phosphate binding site. R26 contacts 3-amino-2-oxopropyl phosphate. H51 (proton acceptor) is an active-site residue. The 1-deoxy-D-xylulose 5-phosphate site is built by R53 and H58. Residue E78 is the Proton acceptor of the active site. T108 provides a ligand contact to 1-deoxy-D-xylulose 5-phosphate. The active-site Proton donor is H199. Residues G200 and G221–H222 each bind 3-amino-2-oxopropyl phosphate.

It belongs to the PNP synthase family. In terms of assembly, homooctamer; tetramer of dimers.

It is found in the cytoplasm. It catalyses the reaction 3-amino-2-oxopropyl phosphate + 1-deoxy-D-xylulose 5-phosphate = pyridoxine 5'-phosphate + phosphate + 2 H2O + H(+). Its pathway is cofactor biosynthesis; pyridoxine 5'-phosphate biosynthesis; pyridoxine 5'-phosphate from D-erythrose 4-phosphate: step 5/5. Its function is as follows. Catalyzes the complicated ring closure reaction between the two acyclic compounds 1-deoxy-D-xylulose-5-phosphate (DXP) and 3-amino-2-oxopropyl phosphate (1-amino-acetone-3-phosphate or AAP) to form pyridoxine 5'-phosphate (PNP) and inorganic phosphate. This Cupriavidus metallidurans (strain ATCC 43123 / DSM 2839 / NBRC 102507 / CH34) (Ralstonia metallidurans) protein is Pyridoxine 5'-phosphate synthase.